Reading from the N-terminus, the 139-residue chain is Ribosome maturation factor RimP (139 aa).

It belongs to the RimP family.

It localises to the cytoplasm. Its function is as follows. Required for maturation of 30S ribosomal subunits. The polypeptide is Ribosome maturation factor RimP (Syntrophomonas wolfei subsp. wolfei (strain DSM 2245B / Goettingen)).